Reading from the N-terminus, the 222-residue chain is MNKMNQLVRFVKDTVAVRKPQSEDKSYLPIPSTIGGHEVNSPFAEPTAPSLGIIQPKCKRADWLIKSHLTITTNYEIKEWETWDRAISDILDLYDGNPVFKPILLFVYYVLAYNARKIPGPSNGVRYGAYFDELTTVWHAIPELMNQEIDYSYNHRVLHRKIQYVISFKIQMSSTKRRTSPIESFIEVTSEGLKHTPQFTTILDRARFVYSLTGGRYVIHPF.

The short motif at Pro46 to Pro49 is the PTAP/PSAP motif element.

In terms of assembly, homomultimer. Interacts with viral nucleocapsid. Interacts with host TSG101.

The protein resides in the virion membrane. It localises to the host endomembrane system. The protein localises to the host nucleus membrane. In terms of biological role, plays a major role in assembly and budding of virion, by recruiting cellular partners of the ESCRT complexes that play a key role in releasing the budding particle from the host membrane. Condensates the ribonucleocapsid core during virus assembly. In Drosophila melanogaster (Fruit fly), this protein is Matrix protein (M).